Reading from the N-terminus, the 348-residue chain is Phospho-2-dehydro-3-deoxyheptonate aldolase, Trp-sensitive (348 aa).

The protein belongs to the class-I DAHP synthase family.

The enzyme catalyses D-erythrose 4-phosphate + phosphoenolpyruvate + H2O = 7-phospho-2-dehydro-3-deoxy-D-arabino-heptonate + phosphate. It functions in the pathway metabolic intermediate biosynthesis; chorismate biosynthesis; chorismate from D-erythrose 4-phosphate and phosphoenolpyruvate: step 1/7. Stereospecific condensation of phosphoenolpyruvate (PEP) and D-erythrose-4-phosphate (E4P) giving rise to 3-deoxy-D-arabino-heptulosonate-7-phosphate (DAHP). In Buchnera aphidicola subsp. Schizaphis graminum (strain Sg), this protein is Phospho-2-dehydro-3-deoxyheptonate aldolase, Trp-sensitive (aroH).